A 320-amino-acid chain; its full sequence is Ferrochelatase (320 aa).

Fe cation-binding residues include H194 and E275.

It belongs to the ferrochelatase family.

The protein localises to the cytoplasm. It carries out the reaction heme b + 2 H(+) = protoporphyrin IX + Fe(2+). It participates in porphyrin-containing compound metabolism; protoheme biosynthesis; protoheme from protoporphyrin-IX: step 1/1. Catalyzes the ferrous insertion into protoporphyrin IX. This Vibrio cholerae serotype O1 (strain ATCC 39315 / El Tor Inaba N16961) protein is Ferrochelatase.